The chain runs to 211 residues: Transcriptional regulatory protein RcsA (211 aa).

Positions 135–200 (LDVHPLTLSQ…VIYHVVRLTD (66 aa)) constitute an HTH luxR-type domain. The H-T-H motif DNA-binding region spans 159–178 (TIQISDKMQIKAKTVSSHKG).

The protein belongs to the RcsA family.

Its function is as follows. Component of the Rcs signaling system, which controls transcription of numerous genes. Binds to DNA to regulate expression of genes. The sequence is that of Transcriptional regulatory protein RcsA from Pantoea stewartii subsp. stewartii (Erwinia stewartii).